The chain runs to 331 residues: Lipoyl synthase (331 aa).

[4Fe-4S] cluster contacts are provided by C60, C65, C71, C86, C90, C93, and S301. The 219-residue stretch at 72–290 (WSRGTATFML…REEGMQLGFL (219 aa)) folds into the Radical SAM core domain.

The protein belongs to the radical SAM superfamily. Lipoyl synthase family. [4Fe-4S] cluster serves as cofactor.

Its subcellular location is the cytoplasm. The enzyme catalyses [[Fe-S] cluster scaffold protein carrying a second [4Fe-4S](2+) cluster] + N(6)-octanoyl-L-lysyl-[protein] + 2 oxidized [2Fe-2S]-[ferredoxin] + 2 S-adenosyl-L-methionine + 4 H(+) = [[Fe-S] cluster scaffold protein] + N(6)-[(R)-dihydrolipoyl]-L-lysyl-[protein] + 4 Fe(3+) + 2 hydrogen sulfide + 2 5'-deoxyadenosine + 2 L-methionine + 2 reduced [2Fe-2S]-[ferredoxin]. It functions in the pathway protein modification; protein lipoylation via endogenous pathway; protein N(6)-(lipoyl)lysine from octanoyl-[acyl-carrier-protein]: step 2/2. Catalyzes the radical-mediated insertion of two sulfur atoms into the C-6 and C-8 positions of the octanoyl moiety bound to the lipoyl domains of lipoate-dependent enzymes, thereby converting the octanoylated domains into lipoylated derivatives. This chain is Lipoyl synthase, found in Deinococcus radiodurans (strain ATCC 13939 / DSM 20539 / JCM 16871 / CCUG 27074 / LMG 4051 / NBRC 15346 / NCIMB 9279 / VKM B-1422 / R1).